The chain runs to 175 residues: Large ribosomal subunit protein uL22 (175 aa).

Residues 113–175 are disordered; the sequence is VESRPVKDQR…EASETKGGSD (63 aa). The segment covering 136-154 has biased composition (low complexity); sequence KTAGRAPAKKAGASSGATK. A compositionally biased stretch (basic and acidic residues) spans 166–175; that stretch reads EASETKGGSD.

The protein belongs to the universal ribosomal protein uL22 family. Part of the 50S ribosomal subunit.

Its function is as follows. This protein binds specifically to 23S rRNA; its binding is stimulated by other ribosomal proteins, e.g. L4, L17, and L20. It is important during the early stages of 50S assembly. It makes multiple contacts with different domains of the 23S rRNA in the assembled 50S subunit and ribosome. The globular domain of the protein is located near the polypeptide exit tunnel on the outside of the subunit, while an extended beta-hairpin is found that lines the wall of the exit tunnel in the center of the 70S ribosome. This is Large ribosomal subunit protein uL22 from Mycobacterium leprae (strain TN).